A 200-amino-acid polypeptide reads, in one-letter code: ATP synthase subunit s, mitochondrial (200 aa).

The N-terminal 25 residues, Met-1 to Tyr-25, are a transit peptide targeting the mitochondrion. The N-terminal domain stretch occupies residues Met-1–Lys-61. Gly-59 contributes to the Mg(2+) binding site. LRR repeat units follow at residues Val-62–Ile-87, Gln-88–Leu-116, Cys-117–Leu-141, and Glu-142–Leu-173. Residue Thr-93 coordinates Mg(2+).

Belongs to the ATP synthase subunit s family. As to quaternary structure, homotetramer. Associates with ATP synthase.

It is found in the mitochondrion. The protein resides in the mitochondrion inner membrane. Involved in regulation of mitochondrial membrane ATP synthase. Necessary for H(+) conduction of ATP synthase. Facilitates energy-driven catalysis of ATP synthesis by blocking a proton leak through an alternative proton exit pathway. In Mus musculus (Mouse), this protein is ATP synthase subunit s, mitochondrial (Dmac2l).